We begin with the raw amino-acid sequence, 292 residues long: 2-hydroxy-3-oxopropionate reductase (292 aa).

Residues 4–18 and serine 94 each bind NAD(+); that span reads GFIGLGIMGTPMAIN. Lysine 169 is an active-site residue. Lysine 237 is an NAD(+) binding site.

The protein belongs to the HIBADH-related family.

The enzyme catalyses (R)-glycerate + NADP(+) = 2-hydroxy-3-oxopropanoate + NADPH + H(+). It carries out the reaction (R)-glycerate + NAD(+) = 2-hydroxy-3-oxopropanoate + NADH + H(+). The protein operates within organic acid metabolism; glycolate degradation; 3-phospho-D-glycerate from glycolate: step 3/4. The sequence is that of 2-hydroxy-3-oxopropionate reductase (glxR) from Escherichia coli (strain K12).